A 118-amino-acid chain; its full sequence is Large ribosomal subunit protein uL18 (118 aa).

This sequence belongs to the universal ribosomal protein uL18 family. In terms of assembly, part of the 50S ribosomal subunit; part of the 5S rRNA/L5/L18/L25 subcomplex. Contacts the 5S and 23S rRNAs.

This is one of the proteins that bind and probably mediate the attachment of the 5S RNA into the large ribosomal subunit, where it forms part of the central protuberance. The polypeptide is Large ribosomal subunit protein uL18 (Phenylobacterium zucineum (strain HLK1)).